The chain runs to 240 residues: Ubiquinone biosynthesis O-methyltransferase (240 aa).

4 residues coordinate S-adenosyl-L-methionine: Arg44, Gly64, Asp85, and Met129.

Belongs to the methyltransferase superfamily. UbiG/COQ3 family.

The catalysed reaction is a 3-demethylubiquinol + S-adenosyl-L-methionine = a ubiquinol + S-adenosyl-L-homocysteine + H(+). It catalyses the reaction a 3-(all-trans-polyprenyl)benzene-1,2-diol + S-adenosyl-L-methionine = a 2-methoxy-6-(all-trans-polyprenyl)phenol + S-adenosyl-L-homocysteine + H(+). Its pathway is cofactor biosynthesis; ubiquinone biosynthesis. Functionally, O-methyltransferase that catalyzes the 2 O-methylation steps in the ubiquinone biosynthetic pathway. This Escherichia coli O81 (strain ED1a) protein is Ubiquinone biosynthesis O-methyltransferase.